A 338-amino-acid polypeptide reads, in one-letter code: Lipoate-protein ligase A (338 aa).

The 188-residue stretch at 29 to 216 folds into the BPL/LPL catalytic domain; the sequence is PATQRVLFLW…AFFAHYGERV (188 aa). Residues Arg-71, 76–79, and Lys-134 contribute to the ATP site; that span reads GAVF. Position 134 (Lys-134) interacts with (R)-lipoate.

This sequence belongs to the LplA family. In terms of assembly, monomer.

It localises to the cytoplasm. The catalysed reaction is L-lysyl-[lipoyl-carrier protein] + (R)-lipoate + ATP = N(6)-[(R)-lipoyl]-L-lysyl-[lipoyl-carrier protein] + AMP + diphosphate + H(+). It participates in protein modification; protein lipoylation via exogenous pathway; protein N(6)-(lipoyl)lysine from lipoate: step 1/2. Its pathway is protein modification; protein lipoylation via exogenous pathway; protein N(6)-(lipoyl)lysine from lipoate: step 2/2. Functionally, catalyzes both the ATP-dependent activation of exogenously supplied lipoate to lipoyl-AMP and the transfer of the activated lipoyl onto the lipoyl domains of lipoate-dependent enzymes. The chain is Lipoate-protein ligase A from Shigella sonnei (strain Ss046).